The primary structure comprises 82 residues: NAD(P)H-quinone oxidoreductase subunit O (82 aa).

It belongs to the complex I NdhO subunit family. In terms of assembly, NDH-1 can be composed of about 15 different subunits; different subcomplexes with different compositions have been identified which probably have different functions.

The protein resides in the cellular thylakoid membrane. It carries out the reaction a plastoquinone + NADH + (n+1) H(+)(in) = a plastoquinol + NAD(+) + n H(+)(out). The enzyme catalyses a plastoquinone + NADPH + (n+1) H(+)(in) = a plastoquinol + NADP(+) + n H(+)(out). Functionally, NDH-1 shuttles electrons from an unknown electron donor, via FMN and iron-sulfur (Fe-S) centers, to quinones in the respiratory and/or the photosynthetic chain. The immediate electron acceptor for the enzyme in this species is believed to be plastoquinone. Couples the redox reaction to proton translocation, and thus conserves the redox energy in a proton gradient. Cyanobacterial NDH-1 also plays a role in inorganic carbon-concentration. This chain is NAD(P)H-quinone oxidoreductase subunit O, found in Prochlorococcus marinus (strain MIT 9211).